An 881-amino-acid polypeptide reads, in one-letter code: Heat shock protein 70 homolog LHS1 (881 aa).

An N-terminal signal peptide occupies residues 1 to 20 (MRNVLRLLFLTAFVAIGSLA). 7 N-linked (GlcNAc...) asparagine glycosylation sites follow: N128, N458, N474, N481, N489, N527, and N844. Positions 833–844 (RKLEQEKSRNNN) are enriched in basic and acidic residues. The interval 833 to 881 (RKLEQEKSRNNNETESTVINSADDKTTIVNDKTTESNPSSEEDILHDEL) is disordered. Polar residues predominate over residues 859-871 (TIVNDKTTESNPS). Acidic residues predominate over residues 872–881 (SEEDILHDEL). Residues 878–881 (HDEL) carry the Prevents secretion from ER motif.

The protein belongs to the heat shock protein 70 family. Interacts with the heat shock protein 70 (HSP70) KAR2, and this stimulates nucleotide exchange on KAR2. KAR2 in turn acts to stimulate the ATPase activity of LHS1. In terms of processing, N-glycosylated.

The protein localises to the endoplasmic reticulum lumen. It carries out the reaction ATP + H2O = ADP + phosphate + H(+). Functionally, chaperone required for protein translocation and folding in the endoplasmic reticulum. The sequence is that of Heat shock protein 70 homolog LHS1 (LHS1) from Saccharomyces cerevisiae (strain ATCC 204508 / S288c) (Baker's yeast).